We begin with the raw amino-acid sequence, 191 residues long: Large ribosomal subunit protein uL5 (191 aa).

This sequence belongs to the universal ribosomal protein uL5 family. As to quaternary structure, part of the 50S ribosomal subunit; part of the 5S rRNA/L5/L18/L25 subcomplex. Contacts the 5S rRNA and the P site tRNA. Forms a bridge to the 30S subunit in the 70S ribosome.

In terms of biological role, this is one of the proteins that bind and probably mediate the attachment of the 5S RNA into the large ribosomal subunit, where it forms part of the central protuberance. In the 70S ribosome it contacts protein S13 of the 30S subunit (bridge B1b), connecting the 2 subunits; this bridge is implicated in subunit movement. Contacts the P site tRNA; the 5S rRNA and some of its associated proteins might help stabilize positioning of ribosome-bound tRNAs. The polypeptide is Large ribosomal subunit protein uL5 (Salinibacter ruber (strain DSM 13855 / M31)).